The primary structure comprises 576 residues: Adenine deaminase 2 (576 aa).

The protein belongs to the metallo-dependent hydrolases superfamily. Adenine deaminase family. The cofactor is Mn(2+).

The enzyme catalyses adenine + H2O + H(+) = hypoxanthine + NH4(+). The chain is Adenine deaminase 2 from Desulfotalea psychrophila (strain LSv54 / DSM 12343).